We begin with the raw amino-acid sequence, 441 residues long: Glutamate--tRNA ligase 1 (441 aa).

The short motif at 7–17 (PSPTGYMHIGN) is the 'HIGH' region element. Positions 236–240 (KMSKR) match the 'KMSKS' region motif. ATP is bound at residue K239.

It belongs to the class-I aminoacyl-tRNA synthetase family. Glutamate--tRNA ligase type 1 subfamily. As to quaternary structure, monomer.

The protein resides in the cytoplasm. It carries out the reaction tRNA(Glu) + L-glutamate + ATP = L-glutamyl-tRNA(Glu) + AMP + diphosphate. In terms of biological role, catalyzes the attachment of glutamate to tRNA(Glu) in a two-step reaction: glutamate is first activated by ATP to form Glu-AMP and then transferred to the acceptor end of tRNA(Glu). The chain is Glutamate--tRNA ligase 1 from Anaplasma marginale (strain St. Maries).